The primary structure comprises 75 residues: uncharacterized protein (75 aa).

The span at 19–38 shows a compositional bias: polar residues; that stretch reads FHNTAPSKTNVNVPRANKSQ. A disordered region spans residues 19–42; the sequence is FHNTAPSKTNVNVPRANKSQSKGK. Residues 47–66 traverse the membrane as a helical segment; that stretch reads LLVLVGTLALVTSVISVNYQ.

The protein localises to the membrane. This is an uncharacterized protein from Saccharomyces cerevisiae (strain ATCC 204508 / S288c) (Baker's yeast).